The following is a 205-amino-acid chain: Dr1-associated corepressor (205 aa).

The Histone-fold domain occupies 14-77 (PARIKKIMQT…SHLKQCIELE (64 aa)). The segment at 91-205 (PDMQGDGEDN…DEEDEEDYDS (115 aa)) is disordered. Positions 98 to 108 (EDNHMDGDKGA) are enriched in basic and acidic residues. Positions 114-125 (PGSGGRKNGGMG) are enriched in gly residues. The span at 138–155 (SEQEDESEDTDTDGEEET) shows a compositional bias: acidic residues. The span at 184-193 (PLPPAPPGPS) shows a compositional bias: pro residues. Over residues 195-205 (PDEEDEEDYDS) the composition is skewed to acidic residues.

Belongs to the NC2 alpha/DRAP1 family. In terms of assembly, heterodimer with DR1. Binds BTAF1. Post-translationally, phosphorylation reduces DNA binding, but has no effect on heterodimerization and TBP binding. As to expression, ubiquitous. Highly expressed in adult testis, heart, skeletal muscle, pancreas and brain, and in fetal brain, liver and kidney.

It localises to the nucleus. Its function is as follows. The association of the DR1/DRAP1 heterodimer with TBP results in a functional repression of both activated and basal transcription of class II genes. This interaction precludes the formation of a transcription-competent complex by inhibiting the association of TFIIA and/or TFIIB with TBP. Can bind to DNA on its own. The sequence is that of Dr1-associated corepressor (DRAP1) from Homo sapiens (Human).